The sequence spans 622 residues: DNA mismatch repair protein MutL (622 aa).

It belongs to the DNA mismatch repair MutL/HexB family.

This protein is involved in the repair of mismatches in DNA. It is required for dam-dependent methyl-directed DNA mismatch repair. May act as a 'molecular matchmaker', a protein that promotes the formation of a stable complex between two or more DNA-binding proteins in an ATP-dependent manner without itself being part of a final effector complex. The protein is DNA mismatch repair protein MutL of Prosthecochloris aestuarii (strain DSM 271 / SK 413).